The following is a 367-amino-acid chain: uncharacterized protein (367 aa).

This is an uncharacterized protein from Buchnera aphidicola subsp. Acyrthosiphon pisum (strain APS) (Acyrthosiphon pisum symbiotic bacterium).